The primary structure comprises 1179 residues: DNA-directed RNA polymerase subunit beta (1179 aa).

The protein belongs to the RNA polymerase beta chain family. The RNAP catalytic core consists of 2 alpha, 1 beta, 1 beta' and 1 omega subunit. When a sigma factor is associated with the core the holoenzyme is formed, which can initiate transcription.

It catalyses the reaction RNA(n) + a ribonucleoside 5'-triphosphate = RNA(n+1) + diphosphate. In terms of biological role, DNA-dependent RNA polymerase catalyzes the transcription of DNA into RNA using the four ribonucleoside triphosphates as substrates. The protein is DNA-directed RNA polymerase subunit beta of Oceanobacillus iheyensis (strain DSM 14371 / CIP 107618 / JCM 11309 / KCTC 3954 / HTE831).